The primary structure comprises 135 residues: Transcription antitermination protein NusB (135 aa).

It belongs to the NusB family.

Its function is as follows. Involved in transcription antitermination. Required for transcription of ribosomal RNA (rRNA) genes. Binds specifically to the boxA antiterminator sequence of the ribosomal RNA (rrn) operons. In Clostridium acetobutylicum (strain ATCC 824 / DSM 792 / JCM 1419 / IAM 19013 / LMG 5710 / NBRC 13948 / NRRL B-527 / VKM B-1787 / 2291 / W), this protein is Transcription antitermination protein NusB.